Reading from the N-terminus, the 167-residue chain is Leptin (167 aa).

The first 21 residues, 1–21 (MLCGPLCRFLWLWPYLSYVEA), serve as a signal peptide directing secretion. The cysteines at positions 117 and 167 are disulfide-linked.

The protein belongs to the leptin family.

It localises to the secreted. In terms of biological role, key player in the regulation of energy balance and body weight control. Once released into the circulation, has central and peripheral effects by binding LEPR, found in many tissues, which results in the activation of several major signaling pathways. In the hypothalamus, acts as an appetite-regulating factor that induces a decrease in food intake and an increase in energy consumption by inducing anorexinogenic factors and suppressing orexigenic neuropeptides, also regulates bone mass and secretion of hypothalamo-pituitary-adrenal hormones. In the periphery, increases basal metabolism, influences reproductive function, regulates pancreatic beta-cell function and insulin secretion, is pro-angiogenic for endothelial cell and affects innate and adaptive immunity. In the arcuate nucleus of the hypothalamus, activates by depolarization POMC neurons inducing FOS and SOCS3 expression to release anorexigenic peptides and inhibits by hyperpolarization NPY neurons inducing SOCS3 with a consequent reduction on release of orexigenic peptides. In addition to its known satiety inducing effect, has a modulatory role in nutrient absorption. In the intestine, reduces glucose absorption by enterocytes by activating PKC and leading to a sequential activation of p38, PI3K and ERK signaling pathways which exerts an inhibitory effect on glucose absorption. Acts as a growth factor on certain tissues, through the activation of different signaling pathways increases expression of genes involved in cell cycle regulation such as CCND1, via JAK2-STAT3 pathway, or VEGFA, via MAPK1/3 and PI3K-AKT1 pathways. May also play an apoptotic role via JAK2-STAT3 pathway and up-regulation of BIRC5 expression. Pro-angiogenic, has mitogenic activity on vascular endothelial cells and plays a role in matrix remodeling by regulating the expression of matrix metalloproteinases (MMPs) and tissue inhibitors of metalloproteinases (TIMPs). In innate immunity, modulates the activity and function of neutrophils by increasing chemotaxis and the secretion of oxygen radicals. Increases phagocytosis by macrophages and enhances secretion of pro-inflammatory mediators. Increases cytotoxic ability of NK cells. Plays a pro-inflammatory role, in synergy with IL1B, by inducing NOS2 which promotes the production of IL6, IL8 and Prostaglandin E2, through a signaling pathway that involves JAK2, PI3K, MAP2K1/MEK1 and MAPK14/p38. In adaptive immunity, promotes the switch of memory T-cells towards T helper-1 cell immune responses. Increases CD4(+)CD25(-) T-cell proliferation and reduces autophagy during TCR (T-cell receptor) stimulation, through MTOR signaling pathway activation and BCL2 up-regulation. The polypeptide is Leptin (LEP) (Felis catus (Cat)).